Reading from the N-terminus, the 559-residue chain is S-layer protein (559 aa).

The N-terminal stretch at 1–28 is a signal peptide; the sequence is MAMSLKKIGAIAVGGAMVASALASGVMA. Residues asparagine 108, asparagine 130, asparagine 155, asparagine 222, and asparagine 373 are each glycosylated (N-linked (GlcNAc...) asparagine).

Belongs to the Mj S-layer protein family.

It localises to the secreted. It is found in the cell wall. The protein resides in the S-layer. In terms of biological role, S-layer protein. The S-layer is a paracrystalline mono-layered assembly of proteins which coat the surface of the cell. In Methanothermococcus thermolithotrophicus (Methanococcus thermolithotrophicus), this protein is S-layer protein.